Reading from the N-terminus, the 299-residue chain is Protein bem46 (299 aa).

The helical transmembrane segment at Y15–Y32 threads the bilayer.

This sequence belongs to the serine esterase family.

Its subcellular location is the membrane. Its function is as follows. Suppressor of bem1/bud5. This is Protein bem46 (bem46) from Schizosaccharomyces pombe (strain 972 / ATCC 24843) (Fission yeast).